Here is a 421-residue protein sequence, read N- to C-terminus: Ankyrin repeat and SOCS box protein 6 (421 aa).

ANK repeat units lie at residues 67–97 (EGVSNALLKMAELGLTRAADVLLRHGANLNF), 102–131 (TYYTALHIAVLRNQPDMVELLVHHGADVNR), 136–166 (HESSPLDLASEEPERLPCLQRLLDLGADVNA), 170–205 (HGKTALLHALASSDGVQIHNTENIRLLLEGGADVKA), 226–255 (GGDKEEAQMINRFCFQVTRLLLAHGADPSE), and 260–289 (ESLTHICLKSFKLHFPLLRFLLESGAAYNC). Residues 360–415 (ALHFSLRQLESYPPPLKHLCRVAIRLYLQPWPVDVKVKALPLPDRLKWYLLSEHSG) enclose the SOCS box domain.

It belongs to the ankyrin SOCS box (ASB) family. As to quaternary structure, binds APS. Identified in a complex with ELOB and ELOC. Interacts with CUL5 and RNF7. Interacts with SQSTM1. In terms of processing, ubiquitinated by RNF41; leading to proteasomal degradation.

The protein resides in the cytoplasm. It functions in the pathway protein modification; protein ubiquitination. Its function is as follows. Probable substrate-recognition component of a SCF-like ECS (Elongin-Cullin-SOCS-box protein) E3 ubiquitin-protein ligase complex which mediates the ubiquitination and subsequent proteasomal degradation of target proteins. May play a role in the regulation of cell proliferation and autophagy by promoting the ubiquitination and degradation of SQSTM1. The polypeptide is Ankyrin repeat and SOCS box protein 6 (ASB6) (Homo sapiens (Human)).